A 138-amino-acid chain; its full sequence is Protein PsiE homolog (138 aa).

The next 4 membrane-spanning stretches (helical) occupy residues 14–34, 56–76, 84–104, and 109–129; these read LQAL…GLLI, YEML…ALII, HFPL…LIII, and AIST…FFIV.

This sequence belongs to the PsiE family.

Its subcellular location is the cell membrane. This chain is Protein PsiE homolog, found in Bacillus velezensis (strain DSM 23117 / BGSC 10A6 / LMG 26770 / FZB42) (Bacillus amyloliquefaciens subsp. plantarum).